An 849-amino-acid chain; its full sequence is Protein translocase subunit SecA (849 aa).

Residues glutamine 85, 103–107 (GEGKT), and aspartate 493 each bind ATP. Cysteine 832, cysteine 834, cysteine 843, and histidine 844 together coordinate Zn(2+).

This sequence belongs to the SecA family. As to quaternary structure, monomer and homodimer. Part of the essential Sec protein translocation apparatus which comprises SecA, SecYEG and auxiliary proteins SecDF. Other proteins may also be involved. Zn(2+) serves as cofactor.

The protein localises to the cell membrane. The protein resides in the cytoplasm. It carries out the reaction ATP + H2O + cellular proteinSide 1 = ADP + phosphate + cellular proteinSide 2.. Part of the Sec protein translocase complex. Interacts with the SecYEG preprotein conducting channel. Has a central role in coupling the hydrolysis of ATP to the transfer of proteins into and across the cell membrane, serving as an ATP-driven molecular motor driving the stepwise translocation of polypeptide chains across the membrane. This is Protein translocase subunit SecA from Streptococcus thermophilus (strain CNRZ 1066).